The following is a 357-amino-acid chain: Peptide chain release factor 1 (357 aa).

Q236 bears the N5-methylglutamine mark.

Belongs to the prokaryotic/mitochondrial release factor family. In terms of processing, methylated by PrmC. Methylation increases the termination efficiency of RF1.

It localises to the cytoplasm. Its function is as follows. Peptide chain release factor 1 directs the termination of translation in response to the peptide chain termination codons UAG and UAA. The sequence is that of Peptide chain release factor 1 from Mycobacterium sp. (strain JLS).